Here is a 188-residue protein sequence, read N- to C-terminus: C-type lectin domain family 5 member A (188 aa).

At 1–4 (MNWH) the chain is on the cytoplasmic side. Residues 5–27 (MIISGLIVVVLKVVGMTLFLLYF) form a helical; Signal-anchor for type II membrane protein membrane-spanning segment. Topologically, residues 28–188 (PQIFNKSNDG…YRRICEKNAK (161 aa)) are extracellular. N-linked (GlcNAc...) asparagine glycosylation occurs at N32. Cysteines 71 and 82 form a disulfide. The region spanning 78–184 (YQARCFFLST…CDISYRRICE (107 aa)) is the C-type lectin domain. 3 N-linked (GlcNAc...) asparagine glycosylation sites follow: N93, N144, and N151. Disulfide bonds link C99–C183 and C161–C175.

Monomer. Homodimer. The majority of CLEC5A is expressed as a monomeric form on macrophages. Interacts with TYROBP/DAP12. The interaction with TYROBP is required for CLEC5A cell surface expression. Interacts with HCST/DAP10. Forms a CLEC5A/TYROBP/HCST trimolecular complex depending almost solely on TYROBP. In terms of assembly, (Microbial infection) Interacts with dengue virus envelope protein E. N-glycosylated. Contains sialic acid residues. As to expression, highly expressed in bone marrow with lower levels in synovium, lung and bronchus. Expressed in peripheral blood monocytes and in the monocyte/macrophage cell lines U-937 and Mono-Mac-6, but not in cell lines of other origins. Expression is down-regulated when monocytes differentiate into dendritic cells.

It is found in the cell membrane. In terms of biological role, functions as a positive regulator of osteoclastogenesis. Cell surface receptor that signals via TYROBP. Regulates inflammatory responses. Its function is as follows. (Microbial infection) Critical macrophage receptor for dengue virus serotypes 1-4. The binding of dengue virus to CLEC5A triggers signaling through the phosphorylation of TYROBP. This interaction does not result in viral entry, but stimulates pro-inflammatory cytokine release. In Homo sapiens (Human), this protein is C-type lectin domain family 5 member A (CLEC5A).